We begin with the raw amino-acid sequence, 273 residues long: Major prion protein homolog (273 aa).

An N-terminal signal peptide occupies residues 1–24; sequence MARLLTTCCLLALLLAACTDVALS. Residues 25-121 form a disordered region; sequence KKGKGKPSGG…QKPWKPPKTN (97 aa). 8 consecutive repeat copies span residues 42–47, 48–53, 54–59, 60–65, 66–71, 72–77, 78–83, and 84–89. Positions 42 to 89 are 8 X 6 AA tandem repeats of [HR]-[NQ]-P-G-Y-P; that stretch reads RQPSYPRQPGYPHNPGYPHNPGYPHNPGYPHNPGYPHNPGYPQNPGYP. A compositionally biased stretch (low complexity) spans 51–94; that stretch reads GYPHNPGYPHNPGYPHNPGYPHNPGYPHNPGYPQNPGYPHNPGY. The Cu(2+) site is built by H66, H72, and H78. 2 residues coordinate Cu(2+): H90 and G93. Over residues 101–111 the composition is skewed to polar residues; sequence YNPSSGGSYHN. C192 and C237 are disulfide-bonded. Residues N194, N209, and N218 are each glycosylated (N-linked (GlcNAc...) asparagine). S248 is lipidated: GPI-anchor amidated serine. A propeptide spans 249 to 273 (removed in mature form); it reads GIQLHPADTWLAVLLLLLTTLFAMH.

Belongs to the prion family. In terms of assembly, monomer and homodimer. Has a tendency to aggregate into amyloid fibrils containing a cross-beta spine, formed by a steric zipper of superposed beta-strands. Soluble oligomers may represent an intermediate stage on the path to fibril formation. Copper binding may promote oligomerization. As to expression, spinal cord and brain.

It is found in the cell membrane. In terms of biological role, its primary physiological function is unclear. Has cytoprotective activity against internal or environmental stresses. May play a role in neuronal development and synaptic plasticity. May be required for neuronal myelin sheath maintenance. May play a role in iron uptake and iron homeostasis. Soluble oligomers are toxic to cultured neuroblastoma cells and induce apoptosis (in vitro). Association with GPC1 (via its heparan sulfate chains) targets PRNP to lipid rafts. Also provides Cu(2+) or Zn(2+) for the ascorbate-mediated GPC1 deaminase degradation of its heparan sulfate side chains. The polypeptide is Major prion protein homolog (PRNP) (Gallus gallus (Chicken)).